We begin with the raw amino-acid sequence, 1102 residues long: Endocytosis protein end4 (1102 aa).

In terms of domain architecture, ENTH spans aspartate 9 to asparagine 139. Residues proline 265–tryptophan 334 form a disordered region. Residues threonine 292–serine 305 are compositionally biased toward polar residues. Residues threonine 338–glutamine 661 adopt a coiled-coil conformation. Residues leucine 858–alanine 1100 enclose the I/LWEQ domain.

Belongs to the SLA2 family.

The protein resides in the cytoplasm. The protein localises to the cytoskeleton. Required for cellular morphogenesis and polarization of the cortical cytoskeleton. Required for establishment of new polarized growth zones where it acts in actin organization. Involved plasma membrane internalization and is essential for fluid-phase endocytosis. The protein is Endocytosis protein end4 (end4) of Schizosaccharomyces pombe (strain 972 / ATCC 24843) (Fission yeast).